The primary structure comprises 163 residues: NADH-quinone oxidoreductase subunit I (163 aa).

4Fe-4S ferredoxin-type domains follow at residues 54–84 (LRRY…IDSA) and 94–123 (TRYD…ETHI). Residues cysteine 64, cysteine 67, cysteine 70, cysteine 74, cysteine 103, cysteine 106, cysteine 109, and cysteine 113 each contribute to the [4Fe-4S] cluster site.

The protein belongs to the complex I 23 kDa subunit family. As to quaternary structure, NDH-1 is composed of 14 different subunits. Subunits NuoA, H, J, K, L, M, N constitute the membrane sector of the complex. The cofactor is [4Fe-4S] cluster.

It is found in the cell inner membrane. It carries out the reaction a quinone + NADH + 5 H(+)(in) = a quinol + NAD(+) + 4 H(+)(out). In terms of biological role, NDH-1 shuttles electrons from NADH, via FMN and iron-sulfur (Fe-S) centers, to quinones in the respiratory chain. The immediate electron acceptor for the enzyme in this species is believed to be ubiquinone. Couples the redox reaction to proton translocation (for every two electrons transferred, four hydrogen ions are translocated across the cytoplasmic membrane), and thus conserves the redox energy in a proton gradient. The chain is NADH-quinone oxidoreductase subunit I from Xanthomonas oryzae pv. oryzae (strain KACC10331 / KXO85).